We begin with the raw amino-acid sequence, 515 residues long: Maturase K (515 aa).

The protein belongs to the intron maturase 2 family. MatK subfamily.

Its subcellular location is the plastid. It is found in the chloroplast. Usually encoded in the trnK tRNA gene intron. Probably assists in splicing its own and other chloroplast group II introns. The polypeptide is Maturase K (Pinus halepensis (Aleppo pine)).